We begin with the raw amino-acid sequence, 83 residues long: Protein YqgD (83 aa).

This sequence belongs to the YqgD family.

This chain is Protein YqgD (yqgD), found in Escherichia coli (strain K12).